The following is a 133-amino-acid chain: Large ribosomal subunit protein bL19 (133 aa).

It belongs to the bacterial ribosomal protein bL19 family.

This protein is located at the 30S-50S ribosomal subunit interface and may play a role in the structure and function of the aminoacyl-tRNA binding site. The protein is Large ribosomal subunit protein bL19 of Stenotrophomonas maltophilia (strain K279a).